Reading from the N-terminus, the 253-residue chain is HTH-type transcriptional regulator YdeO (253 aa).

The region spanning 137–233 (GKVRNIVNMK…GNSPKRVSKE (97 aa)) is the HTH araC/xylS-type domain. 2 DNA-binding regions (H-T-H motif) span residues 154-175 (KDIC…KQEQ) and 200-223 (VNKI…RKHF).

Induces the expression of gadE and mdtEF. Could also regulate the expression of other genes involved in acid resistance. This chain is HTH-type transcriptional regulator YdeO (ydeO), found in Escherichia coli (strain K12).